We begin with the raw amino-acid sequence, 220 residues long: Aklanonic acid methyltransferase DauC (220 aa).

The protein belongs to the methyltransferase superfamily. DnrC family. Homodimer.

The enzyme catalyses aklanonate + S-adenosyl-L-methionine = methyl aklanonate + S-adenosyl-L-homocysteine. The protein operates within antibiotic biosynthesis; daunorubicin biosynthesis. Its pathway is antibiotic biosynthesis; carminomycin biosynthesis. It functions in the pathway antibiotic biosynthesis; rhodomycin biosynthesis. It participates in antibiotic biosynthesis; aclacinomycin biosynthesis. In terms of biological role, involved in the biosynthesis of aklavinone which is an important precursor common to the formation of the clinically significant anthracyclines such as carminomycin, daunorubicin (daunomycin), rhodomycin, aclacinomycin T (aklavin) and aclacinomycin A (aclarubicin). These compounds are aromatic polyketide antibiotics that exhibit high cytotoxicity and are widely applied in the chemotherapy of a variety of cancers. Catalyzes the methyl esterification of aklanonic acid to yield aklanonic acid methyl ester. This chain is Aklanonic acid methyltransferase DauC (dauC), found in Streptomyces sp. (strain C5).